We begin with the raw amino-acid sequence, 278 residues long: Thiazole synthase (278 aa).

Residue Lys-107 is the Schiff-base intermediate with DXP of the active site. Residues Gly-168, 194-195 (AG), and 216-217 (AS) each bind 1-deoxy-D-xylulose 5-phosphate.

Belongs to the ThiG family. In terms of assembly, homotetramer. Forms heterodimers with either ThiH or ThiS.

It localises to the cytoplasm. The catalysed reaction is [ThiS sulfur-carrier protein]-C-terminal-Gly-aminoethanethioate + 2-iminoacetate + 1-deoxy-D-xylulose 5-phosphate = [ThiS sulfur-carrier protein]-C-terminal Gly-Gly + 2-[(2R,5Z)-2-carboxy-4-methylthiazol-5(2H)-ylidene]ethyl phosphate + 2 H2O + H(+). Its pathway is cofactor biosynthesis; thiamine diphosphate biosynthesis. Catalyzes the rearrangement of 1-deoxy-D-xylulose 5-phosphate (DXP) to produce the thiazole phosphate moiety of thiamine. Sulfur is provided by the thiocarboxylate moiety of the carrier protein ThiS. In vitro, sulfur can be provided by H(2)S. The chain is Thiazole synthase from Corynebacterium urealyticum (strain ATCC 43042 / DSM 7109).